Reading from the N-terminus, the 335-residue chain is Ankyrin repeat and SOCS box protein 1 (335 aa).

ANK repeat units lie at residues Cys-36 to Glu-68, Leu-77 to Leu-106, Lys-110 to Gly-139, His-143 to Val-172, Leu-191 to Phe-220, and Ser-235 to Leu-265. One can recognise an SOCS box domain in the interval Leu-286–Glu-335.

It belongs to the ankyrin SOCS box (ASB) family. In terms of assembly, interacts with CUL5 and RNF7. Interacts with TAB2 and TAB3.

Its subcellular location is the cytoplasm. It participates in protein modification; protein ubiquitination. Its function is as follows. Probable substrate-recognition component of a SCF-like ECS (Elongin-Cullin-SOCS-box protein) E3 ligase complex which mediates the ubiquitination and subsequent proteasomal degradation of target proteins. Mediates Notch-induced ubiquitination and degradation of TCF3/E2A and JAK2. Functions as a tumor suppressor by enhancing CHCHD3 'Lys-48'-linked ubiquitination, leading to inhibition of the CHCHD3/ROS signaling pathway. Suppresses TAB2-linked 'Lys-48' polyubiquitination and consequently facilitates the initiation of NF-kappa-B and MAPK signaling cascades. May play a role in testis development. The polypeptide is Ankyrin repeat and SOCS box protein 1 (ASB1) (Homo sapiens (Human)).